We begin with the raw amino-acid sequence, 93 residues long: Large ribosomal subunit protein eL42 (93 aa).

The Zn(2+) site is built by C11, C14, C71, and C74. Residues 11–74 form a C4-type zinc finger; that stretch reads CPYCKKHTSH…IALRLVCDEC (64 aa).

This sequence belongs to the eukaryotic ribosomal protein eL42 family. In terms of assembly, part of the 50S ribosomal subunit. Zn(2+) serves as cofactor.

Binds to the 23S rRNA. In Thermoplasma acidophilum (strain ATCC 25905 / DSM 1728 / JCM 9062 / NBRC 15155 / AMRC-C165), this protein is Large ribosomal subunit protein eL42.